The primary structure comprises 171 residues: S-ribosylhomocysteine lyase (171 aa).

Fe cation is bound by residues His-54, His-58, and Cys-128.

It belongs to the LuxS family. In terms of assembly, homodimer. Fe cation is required as a cofactor.

It catalyses the reaction S-(5-deoxy-D-ribos-5-yl)-L-homocysteine = (S)-4,5-dihydroxypentane-2,3-dione + L-homocysteine. Functionally, involved in the synthesis of autoinducer 2 (AI-2) which is secreted by bacteria and is used to communicate both the cell density and the metabolic potential of the environment. The regulation of gene expression in response to changes in cell density is called quorum sensing. Catalyzes the transformation of S-ribosylhomocysteine (RHC) to homocysteine (HC) and 4,5-dihydroxy-2,3-pentadione (DPD). The polypeptide is S-ribosylhomocysteine lyase (Pectobacterium carotovorum subsp. carotovorum (strain PC1)).